The following is a 497-amino-acid chain: Signal recognition particle subunit SRP54 2 (497 aa).

A G-domain region spans residues 1 to 297; the sequence is MVLAELGGRI…DAKPFVSRLL (297 aa). GTP is bound by residues 108–117, 192–196, and 250–253; these read GLQGEVLEKP, DTSGR, and TKMD. The interval 298–497 is M-domain; sequence GNGDMSGFVN…LMGMFGGRDE (200 aa).

It belongs to the GTP-binding SRP family. SRP54 subfamily. Component of a signal recognition particle (SRP) complex that consists of a 7SL RNA molecule of 300 nucleotides and six protein subunits: SRP72, SRP68, SRP54, SRP19, SRP14 and SRP9.

The protein localises to the cytoplasm. The protein resides in the endoplasmic reticulum. The catalysed reaction is GTP + H2O = GDP + phosphate + H(+). Component of the signal recognition particle (SRP) complex, a ribonucleoprotein complex that mediates the cotranslational targeting of secretory and membrane proteins to the endoplasmic reticulum (ER). As part of the SRP complex, associates with the SRP receptor (SR) component SRPRA to target secretory proteins to the endoplasmic reticulum membrane. Binds to the signal sequence of presecretory proteins when they emerge from the ribosomes. Displays basal GTPase activity, and stimulates reciprocal GTPase activation of the SR subunit SRPRA. Forms a guanosine 5'-triphosphate (GTP)-dependent complex with the SR subunit SRPRA. SR compaction and GTPase mediated rearrangement of SR drive SRP-mediated cotranslational protein translocation into the ER. Requires the presence of SRP9/SRP14 and/or SRP19 to stably interact with RNA. This is Signal recognition particle subunit SRP54 2 (SRP-54B) from Arabidopsis thaliana (Mouse-ear cress).